Reading from the N-terminus, the 233-residue chain is tRNA (guanine-N(7)-)-methyltransferase (233 aa).

Positions 1–21 are disordered; it reads MTEESHPLRGAGNFFGRRHGK. Glu-64, Glu-89, Asp-116, and Asp-138 together coordinate S-adenosyl-L-methionine. Asp-138 is a catalytic residue. Residues Lys-142, Asp-174, and 212 to 215 each bind substrate; that span reads TRYE.

It belongs to the class I-like SAM-binding methyltransferase superfamily. TrmB family.

The enzyme catalyses guanosine(46) in tRNA + S-adenosyl-L-methionine = N(7)-methylguanosine(46) in tRNA + S-adenosyl-L-homocysteine. The protein operates within tRNA modification; N(7)-methylguanine-tRNA biosynthesis. Its function is as follows. Catalyzes the formation of N(7)-methylguanine at position 46 (m7G46) in tRNA. In Brucella anthropi (strain ATCC 49188 / DSM 6882 / CCUG 24695 / JCM 21032 / LMG 3331 / NBRC 15819 / NCTC 12168 / Alc 37) (Ochrobactrum anthropi), this protein is tRNA (guanine-N(7)-)-methyltransferase.